Reading from the N-terminus, the 389-residue chain is Migration and invasion-inhibitory protein (389 aa).

Positions 44 to 54 are enriched in low complexity; that stretch reads LDYSSSSNNLE. 2 disordered regions span residues 44–80 and 131–150; these read LDYS…WDPL and KRPV…AQVP. A compositionally biased stretch (polar residues) spans 58 to 70; the sequence is SQETSASSVAPNS. Basic and acidic residues predominate over residues 71 to 80; that stretch reads QDKRHVWDPL. Phosphoserine is present on serine 309.

As to quaternary structure, interacts with IGFBP2.

In terms of biological role, inhibits glioma cells invasion and down-regulates adhesion- and motility-associated genes such as NFKB2 and ICAM1. Exhibits opposing effects to IGFBP2 on cell invasion. This Rattus norvegicus (Rat) protein is Migration and invasion-inhibitory protein (Miip).